Consider the following 288-residue polypeptide: Fe-S cluster assembly protein dre2 (288 aa).

Residues 1-127 are N-terminal SAM-like domain; that stretch reads MSSSVLVLTS…LSRPNQVEAV (127 aa). A linker region spans residues 128–177; sequence PIKLSNKNGQSASKNKILDFLKSDKENLISGDDDQELIDEDELLDESAHD. Residues cysteine 185, cysteine 196, cysteine 199, and cysteine 201 each coordinate [2Fe-2S] cluster. The tract at residues 185 to 201 is fe-S binding site A; that stretch reads CKPEPGKKKRACKNCTC. Positions 244, 247, 255, and 258 each coordinate [4Fe-4S] cluster. 2 short sequence motifs (cx2C motif) span residues 244-247 and 255-258; these read CGNC and CSGC. The interval 244-258 is fe-S binding site B; sequence CGNCYLGDAFRCSGC.

The protein belongs to the anamorsin family. Monomer. Interacts with tah18. Interacts with tim40. It depends on [2Fe-2S] cluster as a cofactor. [4Fe-4S] cluster is required as a cofactor.

The protein localises to the cytoplasm. Its subcellular location is the mitochondrion intermembrane space. Functionally, component of the cytosolic iron-sulfur (Fe-S) protein assembly (CIA) machinery required for the maturation of extramitochondrial Fe-S proteins. Part of an electron transfer chain functioning in an early step of cytosolic Fe-S biogenesis, facilitating the de novo assembly of a [4Fe-4S] cluster on the scaffold complex cfd1-nbp35. Electrons are transferred to dre2 from NADPH via the FAD- and FMN-containing protein tah18. Tah18-dre2 are also required for the assembly of the diferric tyrosyl radical cofactor of ribonucleotide reductase (RNR), probably by providing electrons for reduction during radical cofactor maturation in the catalytic small subunit suc22. This Schizosaccharomyces pombe (strain 972 / ATCC 24843) (Fission yeast) protein is Fe-S cluster assembly protein dre2.